The following is a 332-amino-acid chain: F-box/SPRY domain-containing protein 1 (332 aa).

Residues 1 to 10 (MTENNEETIV) show a composition bias toward acidic residues. The segment at 1-81 (MTENNEETIV…RRSPRRPEVS (81 aa)) is disordered. The span at 15–24 (CNLTSSTPMK) shows a compositional bias: polar residues. Residues 79–127 (EVSASRLPLKVLNQIFQYLSLKDLRSAMLTCHSWNNALSMEDSDIWQQL) enclose the F-box domain. A B30.2/SPRY domain is found at 138–330 (SDPFLFVELR…VTMVYVGSPQ (193 aa)).

It belongs to the FBXO45/Fsn family. As to quaternary structure, component of an SCF (SKP1-CUL1-F-box protein) E3 ubiquitin ligase complex composed of cul-1, fsn-1, rpm-1 and skr-1. Interacts (via SPRY domain) with scd-2 (via cytoplasmic domain). Interacts (via SPRY domain) with convertase egl-3 (via C-terminus).

Its subcellular location is the synapse. The protein operates within protein modification; protein ubiquitination. In terms of biological role, component of a SCF (SKP1-CUL1-F-box protein) E3 ubiquitin ligase complex which is required for the restriction and/or maturation of synapses in GABAergic neuromuscular junction (NMJ) presynaptic neurons. Promotes NRJ synapse development and synaptic transmission by negatively regulating the daf-2/InsR pathway in muscles. By targeting convertase egl-3 for degradation, negatively modulates insulin-like protein ins-4 and ins-6 processing. May stabilize synapse formation by promoting the down-regulation of scd-2. Regulates axon termination in PLM and ALM neurons. The sequence is that of F-box/SPRY domain-containing protein 1 (fsn-1) from Caenorhabditis briggsae.